The chain runs to 636 residues: Fructose-1,6-bisphosphatase class 3 (636 aa).

It belongs to the FBPase class 3 family. The cofactor is Mn(2+).

It carries out the reaction beta-D-fructose 1,6-bisphosphate + H2O = beta-D-fructose 6-phosphate + phosphate. The protein operates within carbohydrate biosynthesis; gluconeogenesis. The chain is Fructose-1,6-bisphosphatase class 3 from Streptococcus sanguinis (strain SK36).